A 349-amino-acid polypeptide reads, in one-letter code: Inhibitor of nuclear factor kappa-B kinase-interacting protein (349 aa).

A compositionally biased stretch (basic residues) spans 1 to 11; that stretch reads MSEVKSRKKSG. A disordered region spans residues 1–39; that stretch reads MSEVKSRKKSGTKGAPAEPGKRNEGGKSPEARGGGGRGW. Residues 19-30 are compositionally biased toward basic and acidic residues; that stretch reads PGKRNEGGKSPE. Residues 45–61 form a helical membrane-spanning segment; the sequence is GVSLLSLGTCLGLAWFV. A glycan (N-linked (GlcNAc...) asparagine) is linked at asparagine 145. Coiled-coil stretches lie at residues 183–216 and 304–347; these read GLVT…IGDL and IGRL…HISD. N-linked (GlcNAc...) asparagine glycosylation is present at asparagine 327.

In terms of processing, N-glycosylated.

It localises to the endoplasmic reticulum membrane. In terms of biological role, target of p53/TP53 with pro-apoptotic function. The protein is Inhibitor of nuclear factor kappa-B kinase-interacting protein (IKBIP) of Bos taurus (Bovine).